The sequence spans 127 residues: Glycine cleavage system H protein (127 aa).

The Lipoyl-binding domain maps to glutamate 22–glutamate 104. Lysine 63 is subject to N6-lipoyllysine.

This sequence belongs to the GcvH family. The glycine cleavage system is composed of four proteins: P, T, L and H. The cofactor is (R)-lipoate.

Functionally, the glycine cleavage system catalyzes the degradation of glycine. The H protein shuttles the methylamine group of glycine from the P protein to the T protein. Is also involved in protein lipoylation via its role as an octanoyl/lipoyl carrier protein intermediate. This Bacillus cereus (strain G9842) protein is Glycine cleavage system H protein.